The chain runs to 408 residues: Cytochrome P450 55A3 (408 aa).

Cys357 is a heme binding site.

The protein belongs to the cytochrome P450 family. It depends on heme as a cofactor.

In Fusarium lichenicola (Cylindrocarpon lichenicola), this protein is Cytochrome P450 55A3 (CYP55A3).